Consider the following 752-residue polypeptide: MAP/microtubule affinity-regulating kinase 4 (752 aa).

Positions 1–36 are disordered; that stretch reads MSSRTALAPGNDRNSDTHGTLGSGRSSDKGPSWSSR. Positions 59–310 constitute a Protein kinase domain; the sequence is YRLLRTIGKG…LEQIMKDKWI (252 aa). ATP contacts are provided by residues 65 to 73 and Lys88; that span reads IGKGNFAKV. The active-site Proton acceptor is Asp181. Thr214 bears the Phosphothreonine; by LKB1 mark. The 45-residue stretch at 324-368 folds into the UBA domain; sequence EPEEDFGDTKRIEVMVGMGYTREEIKEALTNQKYNEVTATYLLLG. Positions 385–615 are disordered; that stretch reads ARVRAPSDTT…SGRPRPTTNL (231 aa). A compositionally biased stretch (low complexity) spans 391–406; the sequence is SDTTNGTSSSKGSSHN. Phosphoserine is present on residues Ser423 and Ser543. Low complexity predominate over residues 544-553; sequence PSSHSLAPPS. The 50-residue stretch at 703–752 folds into the KA1 domain; sequence AGGPEPLSHFEVEVCQLPRPGLRGVLFRRVAGTALAFRTLVTRISNDLEL.

It belongs to the protein kinase superfamily. CAMK Ser/Thr protein kinase family. SNF1 subfamily. Interacts with MAPT/TAU. Interacts with gamma-tubulin. Interacts with ODF2. Interacts with USP9X. Interacts with YWHAQ. Interacts with NLRP3; promoting NLRP3 recruitment to microtubule organizing center (MTOC). Mg(2+) is required as a cofactor. Post-translationally, ubiquitinated with 'Lys-29'- and 'Lys-33'-linked polyubiquitins which appear to impede LKB1-mediated phosphorylation. Deubiquitinated by USP9X. In terms of processing, phosphorylated at Thr-214 by STK11/LKB1 in complex with STE20-related adapter-alpha (STRADA) pseudo kinase and CAB39. Phosphorylated throughout the cell cycle. Isoform 1 and isoform 2 show similar expression patterns in the central nervous system and are present in the same subsets of neurons including pyramidal and non-pyramidal neurons in the cerebral cortex and hippocampus, cerebellar Purkinje cells, and interneurons and motor neurons in the spinal cord but not in glial cells (at protein level). Isoform 2 is the major isoform in brain and cerebellum. Also expressed in spleen, liver, small intestine, colon, kidney, tongue, testis and lung. Isoform 1 and isoform 2 are expressed at similar levels in heart.

The protein resides in the cytoplasm. The protein localises to the cytoskeleton. Its subcellular location is the microtubule organizing center. It is found in the centrosome. It localises to the cilium axoneme. The protein resides in the cilium basal body. The protein localises to the cell projection. Its subcellular location is the dendrite. It catalyses the reaction L-seryl-[protein] + ATP = O-phospho-L-seryl-[protein] + ADP + H(+). It carries out the reaction L-threonyl-[protein] + ATP = O-phospho-L-threonyl-[protein] + ADP + H(+). With respect to regulation, activated by phosphorylation on Thr-214. In terms of biological role, serine/threonine-protein kinase. Phosphorylates the microtubule-associated protein MAPT/TAU. Also phosphorylates the microtubule-associated proteins MAP2 and MAP4. Involved in regulation of the microtubule network, causing reorganization of microtubules into bundles. Required for the initiation of axoneme extension during cilium assembly. Regulates the centrosomal location of ODF2 and phosphorylates ODF2 in vitro. Plays a role in cell cycle progression, specifically in the G1/S checkpoint. Reduces neuronal cell survival. Plays a role in energy homeostasis by regulating satiety and metabolic rate. Promotes adipogenesis by activating JNK1 and inhibiting the p38MAPK pathway, and triggers apoptosis by activating the JNK1 pathway. Phosphorylates mTORC1 complex member RPTOR and acts as a negative regulator of the mTORC1 complex, probably due to disruption of the interaction between phosphorylated RPTOR and the RRAGA/RRAGC heterodimer which is required for mTORC1 activation. Involved in NLRP3 positioning along microtubules by mediating NLRP3 recruitment to microtubule organizing center (MTOC) upon inflammasome activation. This Mus musculus (Mouse) protein is MAP/microtubule affinity-regulating kinase 4.